Consider the following 206-residue polypeptide: Transcription factor BTF3 (206 aa).

The segment at 1–42 is disordered; it reads MRRTGAPAQADSRGRGRARGGCPGGEATLSQPPPRGGTRGQE. Arginine 19 bears the Omega-N-methylarginine mark. Serine 30 carries the post-translational modification Phosphoserine. N6-methyllysine occurs at positions 46 and 54. An NAC-A/B domain is found at 82–147; the sequence is TADDKKLQFS…AETKQLTEML (66 aa). A Phosphothreonine modification is found at threonine 160. The interval 170 to 206 is disordered; it reads PKQSVDGKAPLATGEDDDDEVPDLVENFDEASKNEAN. Serine 173 carries the post-translational modification Phosphoserine. The segment covering 183–198 has biased composition (acidic residues); sequence GEDDDDEVPDLVENFD.

This sequence belongs to the NAC-beta family. As to quaternary structure, part of the nascent polypeptide-associated complex (NAC), which is a heterodimer of NACA and BTF3 (via NAC-A/B domains). NAC associates with ribosomes through the BTF3/NACB subunit. Both subunits can contact nascent polypeptide chains.

It localises to the cytoplasm. Its subcellular location is the nucleus. Functionally, when associated with NACA, prevents inappropriate targeting of non-secretory polypeptides to the endoplasmic reticulum (ER). Binds to nascent polypeptide chains as they emerge from the ribosome and blocks their interaction with the signal recognition particle (SRP), which normally targets nascent secretory peptides to the ER. BTF3 is also a general transcription factor that can form a stable complex with RNA polymerase II. Required for the initiation of transcription. This chain is Transcription factor BTF3 (BTF3), found in Homo sapiens (Human).